Consider the following 276-residue polypeptide: Large ribosomal subunit protein uL2 (276 aa).

Residues 218–276 form a disordered region; the sequence is PYVRGSAMNPVDHPHGGGEGRAPIGRPAPSTPWGKPALGLKTRKKNKKSNKYIVRRRKK. Residues 258-276 are compositionally biased toward basic residues; the sequence is KTRKKNKKSNKYIVRRRKK.

It belongs to the universal ribosomal protein uL2 family. In terms of assembly, part of the 50S ribosomal subunit. Forms a bridge to the 30S subunit in the 70S ribosome.

In terms of biological role, one of the primary rRNA binding proteins. Required for association of the 30S and 50S subunits to form the 70S ribosome, for tRNA binding and peptide bond formation. It has been suggested to have peptidyltransferase activity; this is somewhat controversial. Makes several contacts with the 16S rRNA in the 70S ribosome. This Finegoldia magna (strain ATCC 29328 / DSM 20472 / WAL 2508) (Peptostreptococcus magnus) protein is Large ribosomal subunit protein uL2.